Consider the following 411-residue polypeptide: ATPase family AAA domain-containing protein 3C (411 aa).

177–184 (GPPGTGKT) provides a ligand contact to ATP.

Belongs to the AAA ATPase family.

In Homo sapiens (Human), this protein is ATPase family AAA domain-containing protein 3C (ATAD3C).